The following is a 483-amino-acid chain: MDPNIMWQARNDGSGLLEEDIQQLRSSIRGTVVLKNEASEEEYNAAVTRWNNVSIRLATLVVYVEDEQDIVKCVEFVNKHYLDVAVCSHGRHSYHGASSSTGMVIDLGRMRKVSVDKEAMTVTAQGGCIARDVELPLEAEGLAAVFGAVNETGVGFLTGAHGLAADNLVSARMVLANGQVVTASDDENSDLFWAIRGAGPNFGIVTEFKYRVHKQGPVFWQMLFYSPDKLKDCVSIVNQMHNISLAQKGGDFQVMMCYLTPPGYPDLHPGLRIFYNGPEEKAKELAAPAYALGPLSVSGGMCSFSDTTRIPPYLEFEGFDRYAASSAHLDYPLDEDLLLEVFTMFRNVIHKYGHHLLHPSKCILDLRNYEKVASVPIDATAYSGRFDVAWMIPDLQWDDPAMDSTMRMEVTSITAHIRERVREAKGDHVSGPRDATAIYPNISAGGEEKAKSVFGPNLPRLRVLKRKYDPNFIWNKWFPIVPA.

The FAD-binding PCMH-type domain occupies 54 to 215 (SIRLATLVVY…TEFKYRVHKQ (162 aa)).

This sequence belongs to the oxygen-dependent FAD-linked oxidoreductase family. The cofactor is FAD.

The protein operates within pigment biosynthesis. It participates in secondary metabolite biosynthesis. Its function is as follows. FAD-linked oxidoreductase; part of the gene cluster that mediates the biosynthesis of pleosporalin A, ascomycone A, as well as a third cryptic naphthoquinone derived pigment, all responsible for the coloration of conidia. Essential for the production of pleosporalin A, but not the 2 other final products. The pathway begins with the biosynthesis of the cyclized heptaketide 3-acetonyl-1,6,8-trihydroxy-2-naphthaldehyde by the NR-PKS pgmA. The C-6 hydroxyl group is further methylated by the O-methyltransferase pgmB to yield fusarubinaldehyde which is in turn oxidized by the cytochrome P450 monooxygenase pgmC at C-9. The C-1 hydroxyl group is then methylated spontaneously. Although pgmE, pgmD and pgmH are essential for the production of pleosporalin A, it is not the case for the 2 other final products and it remains difficult to assign a specific function to each enzyme. PgmF and pgmG seem not to be involved in pigment biosynthesis although they were regulated by the cluster-specific transcription factor pgmR. In Aspergillus terreus (strain NIH 2624 / FGSC A1156), this protein is FAD-linked oxidoreductase pgmH.